A 329-amino-acid chain; its full sequence is Centromere protein L (329 aa).

2 positions are modified to phosphoserine: serine 40 and serine 54.

This sequence belongs to the CENP-L/IML3 family. In terms of assembly, component of the CENPA-CAD complex, composed of CENPI, CENPK, CENPL, CENPO, CENPP, CENPQ, CENPR and CENPS. The CENPA-CAD complex interacts with the CENPA-NAC complex, at least composed of CENPA, CENPC, CENPH, CENPM, CENPN, CENPT and CENPU.

It localises to the nucleus. The protein localises to the chromosome. Its subcellular location is the centromere. Component of the CENPA-CAD (nucleosome distal) complex, a complex recruited to centromeres which is involved in assembly of kinetochore proteins, mitotic progression and chromosome segregation. May be involved in incorporation of newly synthesized CENPA into centromeres via its interaction with the CENPA-NAC complex. In Mus musculus (Mouse), this protein is Centromere protein L (Cenpl).